A 211-amino-acid chain; its full sequence is Protein-L-isoaspartate O-methyltransferase (211 aa).

Ser62 is an active-site residue.

The protein belongs to the methyltransferase superfamily. L-isoaspartyl/D-aspartyl protein methyltransferase family.

It localises to the cytoplasm. The catalysed reaction is [protein]-L-isoaspartate + S-adenosyl-L-methionine = [protein]-L-isoaspartate alpha-methyl ester + S-adenosyl-L-homocysteine. Functionally, catalyzes the methyl esterification of L-isoaspartyl residues in peptides and proteins that result from spontaneous decomposition of normal L-aspartyl and L-asparaginyl residues. It plays a role in the repair and/or degradation of damaged proteins. The protein is Protein-L-isoaspartate O-methyltransferase of Shewanella sp. (strain MR-4).